Reading from the N-terminus, the 1047-residue chain is FACT complex subunit SPT16 (1047 aa).

Ala2 is subject to N-acetylalanine. Residue Lys139 is modified to N6-acetyllysine. Ser188 carries the phosphoserine modification. Residues Lys196 and Lys223 each carry the N6-acetyllysine modification. A Phosphoserine modification is found at Ser455. Residues 465-507 are a coiled coil; it reads RNEMTAEEKRRAHQKELAAQLNEEAKRRLTEQKGEQQIQKARK. The interval 491–518 is disordered; that stretch reads RRLTEQKGEQQIQKARKSNVSYKNPSLM. Lys497 is covalently cross-linked (Glycyl lysine isopeptide (Lys-Gly) (interchain with G-Cter in SUMO2)). The span at 499–514 shows a compositional bias: polar residues; that stretch reads EQQIQKARKSNVSYKN. The residue at position 508 (Ser508) is a Phosphoserine. Position 513 is an N6-acetyllysine; alternate (Lys513). Residue Lys513 forms a Glycyl lysine isopeptide (Lys-Gly) (interchain with G-Cter in SUMO2); alternate linkage. Lys647 is covalently cross-linked (Glycyl lysine isopeptide (Lys-Gly) (interchain with G-Cter in SUMO2)). Phosphoserine is present on residues Ser650 and Ser658. Lys732 and Lys786 each carry N6-acetyllysine. A Phosphothreonine modification is found at Thr903. Residue Lys904 is modified to N6-acetyllysine. The interval 918-1047 is disordered; sequence EQGGWSFLEP…SSAPPKKKRK (130 aa). Over residues 927-973 the composition is skewed to acidic residues; it reads PEGEGSDAEDGDSESEIEDETFNPSEDDYEEEEEDSDEDYSSEAEES. A phosphoserine mark is found at Ser979, Ser982, Ser986, and Ser1015. A compositionally biased stretch (basic and acidic residues) spans 985–1005; the sequence is ESGKDWDELEEEARKADRESR. Residues 1024 to 1039 are compositionally biased toward low complexity; it reads VHSSGRGSNRGSRHSS.

The protein belongs to the peptidase M24 family. SPT16 subfamily. As to quaternary structure, interacts with MYOG (via C-terminal region). Component of the FACT complex, a stable heterodimer of SSRP1 and SUPT16H. Also a component of a CK2-SPT16-SSRP1 complex which forms following UV irradiation, composed of SSRP1, SUPT16H, CSNK2A1, CSNK2A2 and CSNK2B. Interacts with NEK9. Binds to histone H2A-H2B. Identified in a centromere complex containing histones H2A, H2B and H4, and at least CENPA, CENPB, CENPC, CENPT, CENPN, HJURP, SUPT16H, SSRP1 and RSF1. Interacts with GTF2E2. In terms of processing, ADP-ribosylated. ADP-ribosylation by PARP1 is induced by genotoxic stress and correlates with dissociation of FACT from chromatin. In terms of tissue distribution, widely expressed. Expressed in brain, liver, heart, kidneys, lungs, spleen, thymus, ovary, and testes, with highest levels of expression observed in thymus.

It is found in the nucleus. It localises to the chromosome. Its function is as follows. Component of the FACT complex, a general chromatin factor that acts to reorganize nucleosomes. The FACT complex is involved in multiple processes that require DNA as a template such as mRNA elongation, DNA replication and DNA repair. During transcription elongation the FACT complex acts as a histone chaperone that both destabilizes and restores nucleosomal structure. It facilitates the passage of RNA polymerase II and transcription by promoting the dissociation of one histone H2A-H2B dimer from the nucleosome, then subsequently promotes the reestablishment of the nucleosome following the passage of RNA polymerase II. The FACT complex is probably also involved in phosphorylation of 'Ser-392' of p53/TP53 via its association with CK2 (casein kinase II). The polypeptide is FACT complex subunit SPT16 (Supt16h) (Mus musculus (Mouse)).